The following is a 408-amino-acid chain: Arginine biosynthesis bifunctional protein ArgJ (408 aa).

Residues Thr-156, Lys-182, Thr-193, Glu-279, Asn-403, and Ser-408 each contribute to the substrate site. Residue Thr-193 is the Nucleophile of the active site.

It belongs to the ArgJ family. As to quaternary structure, heterotetramer of two alpha and two beta chains.

The protein localises to the cytoplasm. The enzyme catalyses N(2)-acetyl-L-ornithine + L-glutamate = N-acetyl-L-glutamate + L-ornithine. It carries out the reaction L-glutamate + acetyl-CoA = N-acetyl-L-glutamate + CoA + H(+). It functions in the pathway amino-acid biosynthesis; L-arginine biosynthesis; L-ornithine and N-acetyl-L-glutamate from L-glutamate and N(2)-acetyl-L-ornithine (cyclic): step 1/1. The protein operates within amino-acid biosynthesis; L-arginine biosynthesis; N(2)-acetyl-L-ornithine from L-glutamate: step 1/4. Its function is as follows. Catalyzes two activities which are involved in the cyclic version of arginine biosynthesis: the synthesis of N-acetylglutamate from glutamate and acetyl-CoA as the acetyl donor, and of ornithine by transacetylation between N(2)-acetylornithine and glutamate. In Bordetella bronchiseptica (strain ATCC BAA-588 / NCTC 13252 / RB50) (Alcaligenes bronchisepticus), this protein is Arginine biosynthesis bifunctional protein ArgJ.